We begin with the raw amino-acid sequence, 98 residues long: NADH-ubiquinone oxidoreductase chain 4L (98 aa).

A run of 3 helical transmembrane segments spans residues 1–21, 29–49, and 61–81; these read MPPI…GMLV, SLLC…TMAL, and IVLL…LVMV.

Belongs to the complex I subunit 4L family. Core subunit of respiratory chain NADH dehydrogenase (Complex I) which is composed of 45 different subunits.

The protein localises to the mitochondrion inner membrane. It catalyses the reaction a ubiquinone + NADH + 5 H(+)(in) = a ubiquinol + NAD(+) + 4 H(+)(out). Core subunit of the mitochondrial membrane respiratory chain NADH dehydrogenase (Complex I) which catalyzes electron transfer from NADH through the respiratory chain, using ubiquinone as an electron acceptor. Part of the enzyme membrane arm which is embedded in the lipid bilayer and involved in proton translocation. This chain is NADH-ubiquinone oxidoreductase chain 4L (MT-ND4L), found in Orycteropus afer (Aardvark).